The following is a 261-amino-acid chain: Syntaxin-7 (261 aa).

At Ser2 the chain carries N-acetylserine. Topologically, residues 2–238 (SYTPGIGGDP…NYQRKSRKTL (237 aa)) are cytoplasmic. Thr4 carries the post-translational modification Phosphothreonine. The stretch at 47-68 (ELRQQLQQEQQYTNQLAKETDK) forms a coiled coil. Position 79 is a phosphothreonine (Thr79). Ser125, Ser126, Ser129, and Ser205 each carry phosphoserine. The tract at residues 128 to 148 (VSGGFPEDSSKEKNFVSWESQ) is disordered. The 63-residue stretch at 165 to 227 (LRLIHERESS…QQANQQLSRA (63 aa)) folds into the t-SNARE coiled-coil homology domain. The chain crosses the membrane as a helical; Anchor for type IV membrane protein span at residues 239–259 (CIIILILVVGIVIIFFIVWGL). Residues 260–261 (KG) are Vesicular-facing.

It belongs to the syntaxin family. As to quaternary structure, interacts with VPS11, VPS16 and VPS18. Interacts with VPS33A. Forms a SNARE complex with VTI1B, STX8 and VAMP8 which functions in the homotypic fusion of late endosomes. Component of the SNARE complex composed of STX7, STX8, VAMP7 and VTI1B that is required for heterotypic fusion of late endosomes with lysosomes. Interacts with TPC1. As to expression, detected in all tissues tested. Highest expression is found in kidney followed by lung, spleen, heart and brain. Lower expression, in skeletal muscle, liver and testis.

It localises to the early endosome membrane. Functionally, may be involved in protein trafficking from the plasma membrane to the early endosome (EE) as well as in homotypic fusion of endocytic organelles. Mediates the endocytic trafficking from early endosomes to late endosomes and lysosomes. In Rattus norvegicus (Rat), this protein is Syntaxin-7 (Stx7).